We begin with the raw amino-acid sequence, 400 residues long: Enoyl-[acyl-carrier-protein] reductase [NADH] (400 aa).

NAD(+) is bound by residues 48–53 (GSSSGY), 74–75 (FE), 111–112 (DA), and 139–140 (LA). Tyr-225 provides a ligand contact to substrate. The Proton donor role is filled by Tyr-235. Residues Lys-244 and 273–275 (VVT) each bind NAD(+).

This sequence belongs to the TER reductase family. As to quaternary structure, monomer.

The enzyme catalyses a 2,3-saturated acyl-[ACP] + NAD(+) = a (2E)-enoyl-[ACP] + NADH + H(+). It functions in the pathway lipid metabolism; fatty acid biosynthesis. In terms of biological role, involved in the final reduction of the elongation cycle of fatty acid synthesis (FAS II). Catalyzes the reduction of a carbon-carbon double bond in an enoyl moiety that is covalently linked to an acyl carrier protein (ACP). The protein is Enoyl-[acyl-carrier-protein] reductase [NADH] of Shewanella baltica (strain OS185).